The following is a 94-amino-acid chain: Co-chaperonin GroES (94 aa).

The protein belongs to the GroES chaperonin family. In terms of assembly, heptamer of 7 subunits arranged in a ring. Interacts with the chaperonin GroEL.

It is found in the cytoplasm. Its function is as follows. Together with the chaperonin GroEL, plays an essential role in assisting protein folding. The GroEL-GroES system forms a nano-cage that allows encapsulation of the non-native substrate proteins and provides a physical environment optimized to promote and accelerate protein folding. GroES binds to the apical surface of the GroEL ring, thereby capping the opening of the GroEL channel. In Clostridium beijerinckii (strain ATCC 51743 / NCIMB 8052) (Clostridium acetobutylicum), this protein is Co-chaperonin GroES.